The following is a 79-amino-acid chain: Acyl carrier protein (79 aa).

A Carrier domain is found at serine 2–lysine 77. Serine 37 bears the O-(pantetheine 4'-phosphoryl)serine mark.

This sequence belongs to the acyl carrier protein (ACP) family. 4'-phosphopantetheine is transferred from CoA to a specific serine of apo-ACP by AcpS. This modification is essential for activity because fatty acids are bound in thioester linkage to the sulfhydryl of the prosthetic group.

The protein resides in the cytoplasm. The protein operates within lipid metabolism; fatty acid biosynthesis. In terms of biological role, carrier of the growing fatty acid chain in fatty acid biosynthesis. This is Acyl carrier protein from Gluconobacter oxydans (strain 621H) (Gluconobacter suboxydans).